A 614-amino-acid chain; its full sequence is UvrABC system protein C (614 aa).

Positions 26 to 104 (NLPGVYKMLG…IKEYRPPYNV (79 aa)) constitute a GIY-YIG domain. The region spanning 215 to 250 (SDIHSALIEKMEASAEELDFEKAVFYRDQLSMLREV) is the UVR domain.

The protein belongs to the UvrC family. Interacts with UvrB in an incision complex.

The protein localises to the cytoplasm. In terms of biological role, the UvrABC repair system catalyzes the recognition and processing of DNA lesions. UvrC both incises the 5' and 3' sides of the lesion. The N-terminal half is responsible for the 3' incision and the C-terminal half is responsible for the 5' incision. This Psychrobacter arcticus (strain DSM 17307 / VKM B-2377 / 273-4) protein is UvrABC system protein C.